We begin with the raw amino-acid sequence, 226 residues long: SURF1-like protein (226 aa).

Helical transmembrane passes span 3–23 (TNLV…WQLS) and 199–219 (LEYA…YVIY).

This sequence belongs to the SURF1 family.

It localises to the cell membrane. The sequence is that of SURF1-like protein from Rickettsia felis (strain ATCC VR-1525 / URRWXCal2) (Rickettsia azadi).